The sequence spans 208 residues: Ribosome maturation factor RimM (208 aa).

Residues 98-205 form the PRC barrel domain; sequence ADEFYVPDLI…IIEITPPDGL (108 aa). The tract at residues 154 to 174 is disordered; it reads LPSKSKRSRDTKNQKKNQSPP.

This sequence belongs to the RimM family. In terms of assembly, binds ribosomal protein uS19.

It is found in the cytoplasm. Its function is as follows. An accessory protein needed during the final step in the assembly of 30S ribosomal subunit, possibly for assembly of the head region. Essential for efficient processing of 16S rRNA. May be needed both before and after RbfA during the maturation of 16S rRNA. It has affinity for free ribosomal 30S subunits but not for 70S ribosomes. This is Ribosome maturation factor RimM from Trichodesmium erythraeum (strain IMS101).